The primary structure comprises 775 residues: Phosphoribosylformylglycinamidine synthase subunit PurL (775 aa).

H81 is a catalytic residue. ATP contacts are provided by Y84 and K123. E125 serves as a coordination point for Mg(2+). Substrate-binding positions include 126 to 129 (SHNH) and R148. Residue H127 is the Proton acceptor of the active site. Residue D149 coordinates Mg(2+). Residue Q272 coordinates substrate. A Mg(2+)-binding site is contributed by D300. 344-346 (ESQ) contacts substrate. Residues D525 and G562 each coordinate ATP. N563 contacts Mg(2+). S565 provides a ligand contact to substrate.

It belongs to the FGAMS family. In terms of assembly, monomer. Part of the FGAM synthase complex composed of 1 PurL, 1 PurQ and 2 PurS subunits.

Its subcellular location is the cytoplasm. It carries out the reaction N(2)-formyl-N(1)-(5-phospho-beta-D-ribosyl)glycinamide + L-glutamine + ATP + H2O = 2-formamido-N(1)-(5-O-phospho-beta-D-ribosyl)acetamidine + L-glutamate + ADP + phosphate + H(+). Its pathway is purine metabolism; IMP biosynthesis via de novo pathway; 5-amino-1-(5-phospho-D-ribosyl)imidazole from N(2)-formyl-N(1)-(5-phospho-D-ribosyl)glycinamide: step 1/2. In terms of biological role, part of the phosphoribosylformylglycinamidine synthase complex involved in the purines biosynthetic pathway. Catalyzes the ATP-dependent conversion of formylglycinamide ribonucleotide (FGAR) and glutamine to yield formylglycinamidine ribonucleotide (FGAM) and glutamate. The FGAM synthase complex is composed of three subunits. PurQ produces an ammonia molecule by converting glutamine to glutamate. PurL transfers the ammonia molecule to FGAR to form FGAM in an ATP-dependent manner. PurS interacts with PurQ and PurL and is thought to assist in the transfer of the ammonia molecule from PurQ to PurL. This is Phosphoribosylformylglycinamidine synthase subunit PurL from Agrobacterium fabrum (strain C58 / ATCC 33970) (Agrobacterium tumefaciens (strain C58)).